We begin with the raw amino-acid sequence, 311 residues long: MTKNQTWVTEFILLGFPLSLRIQMLLSGLFSLLYVFTLLGNGAILGLIWLDSRLHTPMYFFLSHLAIIDISYASNNVPKMLTNLGLNKRKTISFVPCTMQTFLYMAFAHTECLILVMMSYDRYMAICHPLQYSVIMRWGVCTVLAVTSWACGSLLALVHVVLILRLPFCGPHEINHFFCEILSVLKLACADTWLNQVVIFAASVFILVGPLCLVLVSYSRILAAILRIQSGEGRRKAFSTCSSHLCMVGLFFGSAIVMYMAPKSRHPEEQQKVLSLFYSLFNPMLNPLIYSLRNAEVKGALKRVLWKQRSK.

Residues 1–24 (MTKNQTWVTEFILLGFPLSLRIQM) are Extracellular-facing. A glycan (N-linked (GlcNAc...) asparagine) is linked at N4. The chain crosses the membrane as a helical span at residues 25 to 48 (LLSGLFSLLYVFTLLGNGAILGLI). Topologically, residues 49–56 (WLDSRLHT) are cytoplasmic. Residues 57–78 (PMYFFLSHLAIIDISYASNNVP) form a helical membrane-spanning segment. The Extracellular segment spans residues 79–100 (KMLTNLGLNKRKTISFVPCTMQ). Cysteines 97 and 189 form a disulfide. The helical transmembrane segment at 101 to 120 (TFLYMAFAHTECLILVMMSY) threads the bilayer. Over 121-139 (DRYMAICHPLQYSVIMRWG) the chain is Cytoplasmic. A helical transmembrane segment spans residues 140 to 158 (VCTVLAVTSWACGSLLALV). Residues 159 to 196 (HVVLILRLPFCGPHEINHFFCEILSVLKLACADTWLNQ) are Extracellular-facing. A helical membrane pass occupies residues 197–219 (VVIFAASVFILVGPLCLVLVSYS). Residues 220 to 236 (RILAAILRIQSGEGRRK) lie on the Cytoplasmic side of the membrane. A helical membrane pass occupies residues 237–259 (AFSTCSSHLCMVGLFFGSAIVMY). Topologically, residues 260–272 (MAPKSRHPEEQQK) are extracellular. A helical membrane pass occupies residues 273–292 (VLSLFYSLFNPMLNPLIYSL). The Cytoplasmic portion of the chain corresponds to 293–311 (RNAEVKGALKRVLWKQRSK).

The protein belongs to the G-protein coupled receptor 1 family.

Its subcellular location is the cell membrane. Functionally, odorant receptor. The protein is Olfactory receptor 2A5 (OR2A5) of Homo sapiens (Human).